We begin with the raw amino-acid sequence, 556 residues long: MSVSAFNRRWAAVILEALTRHGVQHICIAPGSRSTPLTLAAAENRAFIHHTHFDERGLGHLALGLAKASRQPVAVIVTSGTATANLYPALIEAGLTGEKLILLTADRPPELIDCGANQAIRQPGMFASHPAQTISLPRPSQDIPARWLVSTIDQALGALHAGGVHINCPFAEPLYGDMDETGVEWQQQLGNWWQSDKPWLRQALQLESEKQRDWFFWRQKRGVVVAGRMSAAEGKKVAEWAQTLGWPLIGDVLSQTGQPLPCADLWLGNGKAVSELAQAQIVVQLGSSLTGKRVLQWQATCEPDEYWLVDNLPGRLDPAQHCGRRLLSSVERWLELHPAEKRQPWATVIPQLAGQAWQAAVASNEPFGEAQLAQRIRRYLPEQGQLFVGNSLVVRLIDALAQLPAGYPVYSNRGASGIDGLIATAAGVQRASARPTLAIVGDLSALYDLNSLALLRQASAPLVLIVVNNNGGQIFSMLPTPQDERRQFYLMPQDVDFSHAAVMFGLAYHRPDDWPSLDEALAGAWRRAGATVIELAVNETDGAQTLQQLLAQVSRL.

It belongs to the TPP enzyme family. MenD subfamily. Homodimer. The cofactor is Mg(2+). Mn(2+) is required as a cofactor. It depends on thiamine diphosphate as a cofactor.

It catalyses the reaction isochorismate + 2-oxoglutarate + H(+) = 5-enolpyruvoyl-6-hydroxy-2-succinyl-cyclohex-3-ene-1-carboxylate + CO2. It functions in the pathway quinol/quinone metabolism; 1,4-dihydroxy-2-naphthoate biosynthesis; 1,4-dihydroxy-2-naphthoate from chorismate: step 2/7. It participates in quinol/quinone metabolism; menaquinone biosynthesis. Its function is as follows. Catalyzes the thiamine diphosphate-dependent decarboxylation of 2-oxoglutarate and the subsequent addition of the resulting succinic semialdehyde-thiamine pyrophosphate anion to isochorismate to yield 2-succinyl-5-enolpyruvyl-6-hydroxy-3-cyclohexene-1-carboxylate (SEPHCHC). This Klebsiella pneumoniae subsp. pneumoniae (strain ATCC 700721 / MGH 78578) protein is 2-succinyl-5-enolpyruvyl-6-hydroxy-3-cyclohexene-1-carboxylate synthase.